Here is a 145-residue protein sequence, read N- to C-terminus: Putative pre-16S rRNA nuclease (145 aa).

Belongs to the YqgF nuclease family.

The protein resides in the cytoplasm. In terms of biological role, could be a nuclease involved in processing of the 5'-end of pre-16S rRNA. The chain is Putative pre-16S rRNA nuclease from Opitutus terrae (strain DSM 11246 / JCM 15787 / PB90-1).